A 143-amino-acid chain; its full sequence is Hemoglobin subunit alpha-2 (143 aa).

Position 2 is an N-acetylserine (serine 2). In terms of domain architecture, Globin spans 2 to 143; that stretch reads SLSTKDKDTV…LARALSEKYR (142 aa). 2 residues coordinate heme b: histidine 60 and histidine 89.

Belongs to the globin family. As to quaternary structure, hb 2 is a heterotetramer of two alpha-2 and two beta chains. Red blood cells.

Its function is as follows. Involved in oxygen transport from gills to the various peripheral tissues. The polypeptide is Hemoglobin subunit alpha-2 (Cottoperca gobio (Frogmouth)).